A 53-amino-acid chain; its full sequence is Conotoxin Ac4.3b (53 aa).

A propeptide spanning residues 1-11 (SDVRNAAVHER) is cleaved from the precursor. Gln12 is modified (pyrrolidone carboxylic acid). Glu14 is modified (4-carboxyglutamate). Ser18 carries O-linked (HexNAc...) serine glycosylation. A 4-hydroxyproline mark is found at Pro28, Pro33, and Pro48. A Proline amide modification is found at Pro48. Residues 49–53 (GRRND) constitute a propeptide that is removed on maturation.

Belongs to the conotoxin A superfamily. Contains 3 disulfide bonds. As to expression, expressed by the venom duct.

The protein resides in the secreted. In terms of biological role, probable neurotoxin with ion channel inhibitor activity. In Conus achatinus (Little frog cone), this protein is Conotoxin Ac4.3b.